We begin with the raw amino-acid sequence, 330 residues long: Exostosin-like 2 (330 aa).

Residues 1-22 are Cytoplasmic-facing; it reads MRCCHICKLPGRVMGIRVLRLS. Residues 23–43 form a helical; Signal-anchor for type II membrane protein membrane-spanning segment; it reads LVVILVLLLVAGALTALLPSV. The Lumenal segment spans residues 44-330; the sequence is KEDKMLMLRR…FPYANYKRKI (287 aa). Gln71 contacts UDP-N-acetyl-alpha-D-galactosamine. A UDP-N-acetyl-alpha-D-glucosamine-binding site is contributed by Gln71. The N-linked (GlcNAc...) asparagine glycan is linked to Asn74. UDP-N-acetyl-alpha-D-galactosamine is bound by residues Arg75, Asn100, Asn129, Arg134, Asp150, Asp151, Asp152, and Asp244. The UDP-N-acetyl-alpha-D-glucosamine site is built by Arg75, Asn100, Asn129, Arg134, Asp150, Asp151, Asp152, Asp244, Asp245, and Arg293. Asp152 is a binding site for Mn(2+). Cysteines 243 and 296 form a disulfide. Residue Asp245 is part of the active site. Arg293 serves as a coordination point for UDP-N-acetyl-alpha-D-galactosamine.

This sequence belongs to the glycosyltransferase 47 family. The cofactor is Mn(2+). Post-translationally, the soluble form derives from the membrane form by proteolytic processing. As to expression, ubiquitous.

It localises to the endoplasmic reticulum membrane. The protein resides in the secreted. The enzyme catalyses 3-O-(beta-D-GlcA-(1-&gt;3)-beta-D-Gal-(1-&gt;3)-beta-D-Gal-(1-&gt;4)-beta-D-Xyl)-L-seryl-[protein] + UDP-N-acetyl-alpha-D-glucosamine = 3-O-(alpha-D-GlcNAc-(1-&gt;4)-beta-D-GlcA-(1-&gt;3)-beta-D-Gal-(1-&gt;3)-beta-D-Gal-(1-&gt;4)-beta-D-Xyl)-L-seryl-[protein] + UDP + H(+). It functions in the pathway glycan metabolism; heparan sulfate biosynthesis. Its function is as follows. Glycosyltransferase required for the biosynthesis of heparan-sulfate and responsible for the alternating addition of beta-1-4-linked glucuronic acid (GlcA) and alpha-1-4-linked N-acetylglucosamine (GlcNAc) units to nascent heparan sulfate chains. The chain is Exostosin-like 2 (EXTL2) from Homo sapiens (Human).